A 122-amino-acid chain; its full sequence is Phycocyanin PC645 alpha-2 subunit (122 aa).

Aspartate 54 and arginine 68 together coordinate (2R,3E)-phycocyanobilin. Mesobiliverdin-binding residues include cysteine 70, lysine 76, glutamate 77, and cysteine 92.

This sequence belongs to the phycoerythrin family. In terms of assembly, heterotetramer of 2 different alpha chains and 2 identical beta chains which form 2 alpha-beta heterodimers within the heterotetramer. Post-translationally, contains two phycocyanobilin chromophores and one mesobiliverdin chromophore with binding mediated by both the alpha and beta subunits.

The protein resides in the plastid. The protein localises to the chloroplast thylakoid membrane. Functionally, light-harvesting photosynthetic tetrapyrrole chromophore-protein from the phycobiliprotein complex. The polypeptide is Phycocyanin PC645 alpha-2 subunit (Chroomonas sp. (strain CCMP270)).